A 1581-amino-acid chain; its full sequence is Spike glycoprotein (1581 aa).

The signal sequence occupies residues 1 to 20 (MFLCFCAATVLCFWINSGGA). Over 21-1551 (DVVPNGTLIF…YNLLPTWITW (1531 aa)) the chain is Virion surface. N25, N384, N494, N574, N935, N969, N1267, N1297, N1385, N1389, N1428, N1431, N1438, N1483, N1487, N1495, and N1515 each carry an N-linked (GlcNAc...) asparagine; by host glycan. Residues 1552–1572 (LTLGFSLFSIVISGINIILFF) form a helical membrane-spanning segment. The Intravirion segment spans residues 1573–1581 (EMNGKVKKS).

The protein belongs to the toroviruses spike protein family. As to quaternary structure, homotrimer.

Its subcellular location is the virion membrane. Its function is as follows. Mediates the binding of virions to the host cell receptor and is involved in membrane fusion. This Berne virus (BEV) protein is Spike glycoprotein (S).